Reading from the N-terminus, the 52-residue chain is NADH dehydrogenase [ubiquinone] 1 alpha subcomplex subunit 4 homolog (52 aa).

A helical membrane pass occupies residues 14 to 30 (LYPLGAAVATAVGFATY).

The protein belongs to the complex I NDUFA4 subunit family.

It is found in the mitochondrion inner membrane. In terms of biological role, accessory subunit of the mitochondrial membrane respiratory chain NADH dehydrogenase (Complex I), that is believed to be not involved in catalysis. Complex I functions in the transfer of electrons from NADH to the respiratory chain. The immediate electron acceptor for the enzyme is believed to be ubiquinone. The chain is NADH dehydrogenase [ubiquinone] 1 alpha subcomplex subunit 4 homolog from Schizosaccharomyces pombe (strain 972 / ATCC 24843) (Fission yeast).